We begin with the raw amino-acid sequence, 363 residues long: Cytochrome b (363 aa).

4 consecutive transmembrane segments (helical) span residues 24–44 (VGFSLGFFIALQIICGVCLAW), 68–90 (FVIRSVHICFTSLLYLLLYIHIF), 105–125 (VWFIGFILFVFIIIIAFIGYV), and 171–191 (LHVLHVLLPFILLIILILHLF). Positions 74 and 88 each coordinate heme b. The heme b site is built by H175 and H189. H194 is an a ubiquinone binding site. A run of 4 helical transmembrane segments spans residues 219 to 239 (FYLRDMFLAFSILLCMMYVIF), 287 to 307 (FLMVILLFSLFLFILNCILWF), 321 to 341 (LILFYSIWMSGFLALYVVLAY), and 342 to 362 (PIWMELQYWVLLLFLLIVCRL).

This sequence belongs to the cytochrome b family. The main subunits of complex b-c1 are: cytochrome b, cytochrome c1 and the Rieske protein. Heme b is required as a cofactor.

The protein resides in the mitochondrion inner membrane. Functionally, component of the ubiquinol-cytochrome c reductase complex (complex III or cytochrome b-c1 complex) that is part of the mitochondrial respiratory chain. The b-c1 complex mediates electron transfer from ubiquinol to cytochrome c. Contributes to the generation of a proton gradient across the mitochondrial membrane that is then used for ATP synthesis. This is Cytochrome b (MT-CYB) from Trypanosoma brucei brucei.